The chain runs to 277 residues: Small ribosomal subunit protein mS23 (277 aa).

2 disordered regions span residues 48-85 and 232-277; these read APSH…KKPS and LAAF…GPPI. Residues 244–269 are compositionally biased toward acidic residues; that stretch reads ESGESEDEIPLIEEEDAIGASEESET.

It belongs to the mitochondrion-specific ribosomal protein mS23 family. As to quaternary structure, component of the mitochondrial small ribosomal subunit.

It localises to the mitochondrion. This Ajellomyces capsulatus (strain NAm1 / WU24) (Darling's disease fungus) protein is Small ribosomal subunit protein mS23 (RSM25).